The sequence spans 362 residues: Probable cysteine protease RDL2 (362 aa).

The signal sequence occupies residues 1–28 (MAATPIRVIVSALVILSVLLLSSSLGVA). The propeptide at 29-129 (TETEIERNET…ERYLYKEGDV (101 aa)) is activation peptide. A glycan (N-linked (GlcNAc...) asparagine) is linked at Asn-36. 2 cysteine pairs are disulfide-bonded: Cys-151-Cys-194 and Cys-185-Cys-228. The active site involves Cys-154. Asn-234 carries an N-linked (GlcNAc...) asparagine glycan. Cys-287 and Cys-338 are oxidised to a cystine. Residues His-293 and Asn-313 contribute to the active site.

Belongs to the peptidase C1 family.

Its function is as follows. Probable thiol protease. This is Probable cysteine protease RDL2 from Arabidopsis thaliana (Mouse-ear cress).